The chain runs to 238 residues: uncharacterized protein (238 aa).

Disordered regions lie at residues 1–51 (MPCT…ASCA) and 214–238 (ITVEPAGGSAEPTSDPVALMNFPTA). The segment covering 16–31 (ATWRTARPAPRRCGSC) has biased composition (low complexity).

This is an uncharacterized protein from Streptomyces griseus.